The sequence spans 410 residues: F-box protein At5g36730 (410 aa).

The F-box domain occupies M1–L46.

In Arabidopsis thaliana (Mouse-ear cress), this protein is F-box protein At5g36730.